The following is a 50-amino-acid chain: Large ribosomal subunit protein bL33 (50 aa).

The protein belongs to the bacterial ribosomal protein bL33 family.

The sequence is that of Large ribosomal subunit protein bL33 from Citrifermentans bemidjiense (strain ATCC BAA-1014 / DSM 16622 / JCM 12645 / Bem) (Geobacter bemidjiensis).